A 175-amino-acid chain; its full sequence is NADH-quinone oxidoreductase subunit I 1 (175 aa).

2 consecutive 4Fe-4S ferredoxin-type domains span residues 44–74 and 90–119; these read LNRW…VESA and RVYQ…MIND. 8 residues coordinate [4Fe-4S] cluster: Cys54, Cys57, Cys60, Cys64, Cys99, Cys102, Cys105, and Cys109.

It belongs to the complex I 23 kDa subunit family. NDH-1 is composed of 14 different subunits. Subunits NuoA, H, J, K, L, M, N constitute the membrane sector of the complex. [4Fe-4S] cluster serves as cofactor.

It is found in the cell membrane. The catalysed reaction is a quinone + NADH + 5 H(+)(in) = a quinol + NAD(+) + 4 H(+)(out). Functionally, NDH-1 shuttles electrons from NADH, via FMN and iron-sulfur (Fe-S) centers, to quinones in the respiratory chain. The immediate electron acceptor for the enzyme in this species is believed to be menaquinone. Couples the redox reaction to proton translocation (for every two electrons transferred, four hydrogen ions are translocated across the cytoplasmic membrane), and thus conserves the redox energy in a proton gradient. The sequence is that of NADH-quinone oxidoreductase subunit I 1 from Mycolicibacterium paratuberculosis (strain ATCC BAA-968 / K-10) (Mycobacterium paratuberculosis).